The primary structure comprises 321 residues: tRNA U34 carboxymethyltransferase (321 aa).

Carboxy-S-adenosyl-L-methionine-binding positions include Lys-90, Trp-104, Lys-109, Gly-129, 151-153, 180-181, Met-195, Tyr-199, and Arg-314; these read DPT and IE.

It belongs to the class I-like SAM-binding methyltransferase superfamily. CmoB family. In terms of assembly, homotetramer.

It carries out the reaction carboxy-S-adenosyl-L-methionine + 5-hydroxyuridine(34) in tRNA = 5-carboxymethoxyuridine(34) in tRNA + S-adenosyl-L-homocysteine + H(+). In terms of biological role, catalyzes carboxymethyl transfer from carboxy-S-adenosyl-L-methionine (Cx-SAM) to 5-hydroxyuridine (ho5U) to form 5-carboxymethoxyuridine (cmo5U) at position 34 in tRNAs. This Haemophilus influenzae (strain PittGG) protein is tRNA U34 carboxymethyltransferase.